Here is a 293-residue protein sequence, read N- to C-terminus: MAISMTGFGRGEYKDDNYYFLVECKTINHKYSDINIRLPRKISFLEDKVRNLVKNYVKRGRVDLYIKFDLLGKEDVNLNFDEGLASQYIDILKEIKNKFDIIDDISVMNVAKFPDIVKIEEKEEDEDLLWSMLNQAVEDALIKLREMRSEEGKKLAEDIAMRCDLLKNHIEEIEKYSSSVVEDYREKLNLRISELLDDPSIIDENRLAQEVAIYADKSSITEEIVRFKSHIGQLKNTIFKDDSIGRKIDFLIQEMNRETNTIGSKSSDINITNLVVEVKSELEKIREQIQNIE.

The protein belongs to the YicC/YloC family. A divalent metal cation serves as cofactor.

In terms of biological role, negatively modulates sporulation, probably in response to nutrient conditions. Effects expression of sporulation regulator spo0A in an indirect manner, possibly via repression of the sinRR' operon. Functionally, probably a ssRNA endonuclease. Might contribute to small RNA (sRNA) regulation. This chain is Probable endoribonuclease YicC, found in Clostridioides difficile (strain 630) (Peptoclostridium difficile).